The sequence spans 183 residues: MTGNIVARRYARALFALGKKSGLSDLETFGNDLAALAGTLETAPELVRMFRNPVFTPDEKRNVIAKLLDKLKVCPTVRNFCLLLADRERLAFIQDIQAYYGILLDAEKGVIRGELVTAIELANAKRDKVKAQLEAQAGRKLELGFSVDKNILGGVVLKVGDRILDASLRAQLGILKDNIKRGE.

The protein belongs to the ATPase delta chain family. In terms of assembly, F-type ATPases have 2 components, F(1) - the catalytic core - and F(0) - the membrane proton channel. F(1) has five subunits: alpha(3), beta(3), gamma(1), delta(1), epsilon(1). F(0) has three main subunits: a(1), b(2) and c(10-14). The alpha and beta chains form an alternating ring which encloses part of the gamma chain. F(1) is attached to F(0) by a central stalk formed by the gamma and epsilon chains, while a peripheral stalk is formed by the delta and b chains.

The protein localises to the cell inner membrane. F(1)F(0) ATP synthase produces ATP from ADP in the presence of a proton or sodium gradient. F-type ATPases consist of two structural domains, F(1) containing the extramembraneous catalytic core and F(0) containing the membrane proton channel, linked together by a central stalk and a peripheral stalk. During catalysis, ATP synthesis in the catalytic domain of F(1) is coupled via a rotary mechanism of the central stalk subunits to proton translocation. Its function is as follows. This protein is part of the stalk that links CF(0) to CF(1). It either transmits conformational changes from CF(0) to CF(1) or is implicated in proton conduction. The protein is ATP synthase subunit delta of Nitratidesulfovibrio vulgaris (strain ATCC 29579 / DSM 644 / CCUG 34227 / NCIMB 8303 / VKM B-1760 / Hildenborough) (Desulfovibrio vulgaris).